The sequence spans 248 residues: 2,3-bisphosphoglycerate-dependent phosphoglycerate mutase (248 aa).

Substrate is bound by residues 8-15, 21-22, R60, 87-90, K98, 114-115, and 183-184; these read RHGESAWN, TG, EKHY, RR, and GN. Residue H9 is the Tele-phosphohistidine intermediate of the active site. The active-site Proton donor/acceptor is E87.

The protein belongs to the phosphoglycerate mutase family. BPG-dependent PGAM subfamily.

It carries out the reaction (2R)-2-phosphoglycerate = (2R)-3-phosphoglycerate. The protein operates within carbohydrate degradation; glycolysis; pyruvate from D-glyceraldehyde 3-phosphate: step 3/5. In terms of biological role, catalyzes the interconversion of 2-phosphoglycerate and 3-phosphoglycerate. The sequence is that of 2,3-bisphosphoglycerate-dependent phosphoglycerate mutase from Bacteroides fragilis (strain ATCC 25285 / DSM 2151 / CCUG 4856 / JCM 11019 / LMG 10263 / NCTC 9343 / Onslow / VPI 2553 / EN-2).